A 251-amino-acid polypeptide reads, in one-letter code: tRNA (guanine-N(1)-)-methyltransferase (251 aa).

Residues G113 and 133–138 (IGDYVL) contribute to the S-adenosyl-L-methionine site.

The protein belongs to the RNA methyltransferase TrmD family. Homodimer.

The protein localises to the cytoplasm. It catalyses the reaction guanosine(37) in tRNA + S-adenosyl-L-methionine = N(1)-methylguanosine(37) in tRNA + S-adenosyl-L-homocysteine + H(+). Specifically methylates guanosine-37 in various tRNAs. The protein is tRNA (guanine-N(1)-)-methyltransferase of Pectobacterium atrosepticum (strain SCRI 1043 / ATCC BAA-672) (Erwinia carotovora subsp. atroseptica).